Consider the following 206-residue polypeptide: Large ribosomal subunit protein uL4 (206 aa).

The tract at residues 63–93 (MYKQKGTGRARHHSARAPQFRGGGKAHGPVV) is disordered. The span at 64–77 (YKQKGTGRARHHSA) shows a compositional bias: basic residues.

It belongs to the universal ribosomal protein uL4 family. As to quaternary structure, part of the 50S ribosomal subunit.

Its function is as follows. One of the primary rRNA binding proteins, this protein initially binds near the 5'-end of the 23S rRNA. It is important during the early stages of 50S assembly. It makes multiple contacts with different domains of the 23S rRNA in the assembled 50S subunit and ribosome. In terms of biological role, forms part of the polypeptide exit tunnel. The sequence is that of Large ribosomal subunit protein uL4 from Sinorhizobium medicae (strain WSM419) (Ensifer medicae).